The chain runs to 344 residues: Probable magnesium transporter NIPA9 (344 aa).

At M1 to K46 the chain is on the cytoplasmic side. 2 consecutive transmembrane segments (helical) span residues P47 to S67 and L68 to F88. Topologically, residues S89 to N98 are cytoplasmic. Residues V99–G119 traverse the membrane as a helical segment. At E120 to S125 the chain is on the extracellular side. A helical transmembrane segment spans residues L126–L146. Topologically, residues N147 to E166 are cytoplasmic. Residues V167–V187 traverse the membrane as a helical segment. At S188 to G191 the chain is on the extracellular side. The chain crosses the membrane as a helical span at residues F192 to I212. Topologically, residues C213–A231 are cytoplasmic. The helical transmembrane segment at I232–F252 threads the bilayer. The Extracellular portion of the chain corresponds to A253–R265. A helical membrane pass occupies residues L266–S286. Residues R287 to D344 are Cytoplasmic-facing.

It belongs to the NIPA (TC 2.A.7) family. As to quaternary structure, homodimer.

Its subcellular location is the cell membrane. The protein localises to the early endosome. Its function is as follows. Acts as a Mg(2+) transporter. Can also transport other divalent cations such as Fe(2+), Sr(2+), Ba(2+), Mn(2+) and Co(2+) but to a much less extent than Mg(2+). In Arabidopsis thaliana (Mouse-ear cress), this protein is Probable magnesium transporter NIPA9.